The following is a 420-amino-acid chain: Succinate--CoA ligase [GDP-forming] subunit beta, mitochondrial (420 aa).

One can recognise an ATP-grasp domain in the interval 35 to 263 (KSLMDKYGVN…NASFRQKEIF (229 aa)). Residues Q46, 78 to 80 (GRG), and V135 each bind GTP. Mg(2+)-binding residues include N232 and D246. Residues N297 and 354 to 356 (GIM) contribute to the substrate site.

Belongs to the succinate/malate CoA ligase beta subunit family. GTP-specific subunit beta subfamily. Heterodimer of an alpha and a beta subunit. The beta subunit determines specificity for GTP. Mg(2+) is required as a cofactor.

It localises to the mitochondrion. It catalyses the reaction GTP + succinate + CoA = succinyl-CoA + GDP + phosphate. It participates in carbohydrate metabolism; tricarboxylic acid cycle; succinate from succinyl-CoA (ligase route): step 1/1. In terms of biological role, GTP-specific succinyl-CoA synthetase functions in the citric acid cycle (TCA), coupling the hydrolysis of succinyl-CoA to the synthesis of GTP and thus represents the only step of substrate-level phosphorylation in the TCA. The beta subunit provides nucleotide specificity of the enzyme and binds the substrate succinate, while the binding sites for coenzyme A and phosphate are found in the alpha subunit. The protein is Succinate--CoA ligase [GDP-forming] subunit beta, mitochondrial (scsB) of Dictyostelium discoideum (Social amoeba).